The following is a 547-amino-acid chain: Chaperonin GroEL 2 (547 aa).

ATP-binding positions include 30 to 33 (TLGP), lysine 51, 87 to 91 (DGTTT), glycine 415, and aspartate 496.

It belongs to the chaperonin (HSP60) family. Forms a cylinder of 14 subunits composed of two heptameric rings stacked back-to-back. Interacts with the co-chaperonin GroES.

Its subcellular location is the cytoplasm. The enzyme catalyses ATP + H2O + a folded polypeptide = ADP + phosphate + an unfolded polypeptide.. In terms of biological role, together with its co-chaperonin GroES, plays an essential role in assisting protein folding. The GroEL-GroES system forms a nano-cage that allows encapsulation of the non-native substrate proteins and provides a physical environment optimized to promote and accelerate protein folding. The polypeptide is Chaperonin GroEL 2 (Rhodopseudomonas palustris (strain ATCC BAA-98 / CGA009)).